The primary structure comprises 75 residues: Small ribosomal subunit protein bS16c (75 aa).

The protein belongs to the bacterial ribosomal protein bS16 family.

The protein localises to the plastid. It is found in the chloroplast. The sequence is that of Small ribosomal subunit protein bS16c from Cyanidioschyzon merolae (strain NIES-3377 / 10D) (Unicellular red alga).